Reading from the N-terminus, the 799-residue chain is Cadherin-8 (799 aa).

Residues 1 to 29 (MPERLAEMLLDLWTPLIILWITLPPCIYM) form the signal peptide. Residues 30–61 (APMNQSQVLMSGSPLELNSLGEEQRILNRSKR) constitute a propeptide that is removed on maturation. N-linked (GlcNAc...) asparagine glycans are attached at residues N33 and N57. Cadherin domains follow at residues 62–167 (GWVW…APEF), 168–276 (LNGP…PPKF), 277–391 (AQSL…PPVF), 392–494 (SSPT…DNAP), and 495–616 (EFAS…YVLP). Residues 62–621 (GWVWNQMFVL…AYVLPIGLSM (560 aa)) are Extracellular-facing. N188 is a glycosylation site (N-linked (GlcNAc...) asparagine). N-linked (GlcNAc...) asparagine glycans are attached at residues N463, N473, and N544. A helical membrane pass occupies residues 622 to 642 (GALIAILACIILLLVIVVLFV). Over 643-799 (TLRRHKNEPL…YSVGESDKET (157 aa)) the chain is Cytoplasmic. A Phosphoserine modification is found at S795.

In terms of tissue distribution, mainly expressed in brain. Found in certain nerve cell lines, such as retinoblasts, glioma cells and neuroblasts.

It is found in the cell membrane. In terms of biological role, cadherins are calcium-dependent cell adhesion proteins. They preferentially interact with themselves in a homophilic manner in connecting cells; cadherins may thus contribute to the sorting of heterogeneous cell types. The chain is Cadherin-8 (CDH8) from Homo sapiens (Human).